Consider the following 94-residue polypeptide: Large ribosomal subunit protein eL42 (94 aa).

Cysteine 11, cysteine 14, cysteine 71, and cysteine 74 together coordinate Zn(2+). A C4-type zinc finger spans residues 11–74; sequence CPFCKRHTIH…LDLRFRCTVC (64 aa).

This sequence belongs to the eukaryotic ribosomal protein eL42 family. Part of the 50S ribosomal subunit. Requires Zn(2+) as cofactor.

Binds to the 23S rRNA. The polypeptide is Large ribosomal subunit protein eL42 (Pyrococcus abyssi (strain GE5 / Orsay)).